We begin with the raw amino-acid sequence, 2603 residues long: Ankyrin repeat domain-containing protein 17 (2603 aa).

The residue at position 1 (Met1) is an N-acetylmethionine. Low complexity-rich tracts occupy residues 1–34 (MEKATVPVAAATAAEGEGSPPAVAAVAGPPAAAE) and 42–53 (SSRARSASSPRG). The segment at 1–143 (MEKATVPVAA…SFILDQDDLE (143 aa)) is disordered. 2 positions are modified to phosphoserine: Ser19 and Ser50. Positions 63–79 (KKKPPQQQHHKAKRNRT) are enriched in basic residues. Residues 84–94 (SSSESSSDSDN) show a composition bias toward low complexity. A compositionally biased stretch (gly residues) spans 95–111 (SGGGGGGGGGGGGGGGT). The span at 116-131 (SEEEEDDDDEEEEVSE) shows a compositional bias: acidic residues. Residue Ser156 is modified to Phosphoserine. ANK repeat units follow at residues 233-262 (SDNRSLAEACSEGDVNAVRKLLIEGRSVNE), 266-295 (EGESLLCLACSAGYYELAQVLLAMHANVED), 300-329 (GDITPLMAAANGGHVKIVKLLLAHKADVNA), 333-362 (TGNTALTYACAGGYVDVVKVLLESGASIED), 366-395 (NGHTPLMEAGSAGHVEVARLLLENGAGINT), 400-429 (FKESALTLACYKGHLEMVRFLLEAGADQEH), 433-462 (EMHTALMEACMDGHVEVARLLLDSGAQVNM), 466-495 (SFESPLTLAACGGHVELAALLIERGASLEE), 499-528 (EGYTPLMEAAREGHEEMVALLLGQGANINA), 533-562 (TQETALTLACCGGFLEVADFLIKAGADIEL), 563-592 (GCSTPLMEAAQEGHLELVKYLLAAGANVHA), 596-625 (TGDTALTYACENGHTDVADVLLQAGADLEH), 629-658 (GGRTPLMKAARAGHVCTVQFLISKGANVNR), 663-692 (NDHTVLSLACAGGHLAVVELLLAHGADPTH), and 696-725 (DGSTMLIEAAKGGHTSVVCYLLDYPNNLLS). Lys318 is covalently cross-linked (Glycyl lysine isopeptide (Lys-Gly) (interchain with G-Cter in SUMO2)). The residue at position 803 (Ser803) is a Phosphoserine. ANK repeat units follow at residues 1082-1111 (NHDTALTLACAGGHEELVQTLLERGASIEH), 1115-1144 (KGFTPLILAATAGHVGVVEILLDNGADIEA), 1149-1178 (TKDTPLSLACSGGRQEVVELLLARGANKEH), 1182-1211 (SDYTPLSLAASGGYVNIIKILLNAGAEINS), 1217-1246 (LGISPLMLAAMNGHTAAVKLLLDMGSDINA), 1251-1280 (NRNTALTLACFQGRTEVVSLLLDRKANVEH), 1284-1313 (TGLTPLMEAASGGYAEVGRVLLDKGADVNA), 1319-1348 (SRDTALTIAADKGHYKFCELLIGRGAHIDV), 1352-1381 (KGNTPLWLAANGGHLDVVQLLVQAGADVDA), and 1385-1414 (RKITPLMAAFRKGHVKVVRYLVKEVNQFPS). Residues 1442–1526 (VQAKDRQAAE…EKEKLKVEDE (85 aa)) adopt a coiled-coil conformation. At Ser1457 the chain carries Phosphoserine. Disordered stretches follow at residues 1479–1500 (AKREKRKEKRRKKKEEQRRKLE) and 1517–1717 (EKEK…QKRE). Over residues 1481-1491 (REKRKEKRRKK) the composition is skewed to basic residues. Composition is skewed to low complexity over residues 1531–1550 (TEPPSATTTTTIGISATWTT), 1602–1611 (ESKSSSTSES), and 1620–1632 (SSCSDESSNSNSS). Residues Ser1635 and Ser1639 each carry the phosphoserine modification. Composition is skewed to polar residues over residues 1642–1652 (VVTTTVSSKKQ) and 1675–1703 (LSETISEGTSNSLSTCTKSGPSPLSSPNG). 3 positions are modified to phosphoserine: Ser1696, Ser1700, and Ser1709. Positions 1725–1789 (RRSKKVSVPS…ESTRQATQLI (65 aa)) constitute a KH domain. Arg1874 carries the post-translational modification Asymmetric dimethylarginine. 3 disordered regions span residues 1906–1995 (PRLP…PSVR), 2011–2192 (TTVT…HKNS), and 2273–2332 (VVSS…YGSV). Low complexity-rich tracts occupy residues 1950-1995 (SNQN…PSVR) and 2011-2028 (TTVTTTASNNNTAPTNAT). 6 positions are modified to phosphoserine: Ser2042, Ser2044, Ser2045, Ser2047, Ser2059, and Ser2067. Polar residues predominate over residues 2066 to 2078 (ASPNKVASSSEQE). Residues 2095–2106 (SSSSSGSSSAHS) show a composition bias toward low complexity. Composition is skewed to polar residues over residues 2107–2127 (NQQQPPGSVSQEPRPPLQQSQ) and 2273–2303 (VVSSQSTPESMLSGKSSYLPNSDPLHQSDTS). Positions 2308–2318 (FRPPLQRPAPS) are enriched in pro residues. Ser2373 and Ser2401 each carry phosphoserine. The interval 2381–2423 (CSSASNDSSAQSVSSGVRAPSPAPSSVPLGSEKPSNVSQDRKV) is disordered. Low complexity predominate over residues 2382–2411 (SSASNDSSAQSVSSGVRAPSPAPSSVPLGS).

As to quaternary structure, interacts (via N-terminus) with NOD2. Interacts with CDK2, MCM3, MCM5, MCM7, CDC6 and PCNA. Interacts with MAVS and IFIH1. Interacts (via the second ankyrin repeat cluster) with DDX58. In terms of assembly, (Microbial infection) Interacts with enterovirus 71/EV71 capsid protein VP1. Post-translationally, phosphorylated by CDK2. As to expression, ubiquitously expressed.

Its subcellular location is the cytoplasm. It localises to the nucleus. Could play pivotal roles in cell cycle and DNA regulation. Involved in innate immune defense against viruse by positively regulating the viral dsRNA receptors DDX58 and IFIH1 signaling pathways. Involves in NOD2- and NOD1-mediated responses to bacteria suggesting a role in innate antibacterial immune pathways too. Target of enterovirus 71 which is the major etiological agent of HFMD (hand, foot and mouth disease). Could play a central role for the formation and/or maintenance of the blood vessels of the circulation system. This Homo sapiens (Human) protein is Ankyrin repeat domain-containing protein 17 (ANKRD17).